A 414-amino-acid chain; its full sequence is Gamma-glutamyl phosphate reductase (414 aa).

The protein belongs to the gamma-glutamyl phosphate reductase family.

Its subcellular location is the cytoplasm. The catalysed reaction is L-glutamate 5-semialdehyde + phosphate + NADP(+) = L-glutamyl 5-phosphate + NADPH + H(+). It participates in amino-acid biosynthesis; L-proline biosynthesis; L-glutamate 5-semialdehyde from L-glutamate: step 2/2. Functionally, catalyzes the NADPH-dependent reduction of L-glutamate 5-phosphate into L-glutamate 5-semialdehyde and phosphate. The product spontaneously undergoes cyclization to form 1-pyrroline-5-carboxylate. This is Gamma-glutamyl phosphate reductase from Clostridium botulinum (strain Eklund 17B / Type B).